Reading from the N-terminus, the 37-residue chain is Large ribosomal subunit protein bL36c (37 aa).

The protein belongs to the bacterial ribosomal protein bL36 family.

The protein resides in the plastid. Its subcellular location is the chloroplast. This Cyanidioschyzon merolae (strain NIES-3377 / 10D) (Unicellular red alga) protein is Large ribosomal subunit protein bL36c.